The following is a 314-amino-acid chain: MYMYEEERNNINNNQEGLRLEMAFPQHGFMFQQLHEDNAHHLPSPTSLPSCPPHLFYGGGGNYMMNRSMSFTGVSDHHHLTQKSPTTTNNMNDQDQVGEEDNLSDDGSHMMLGEKKKRLNLEQVRALEKSFELGNKLEPERKMQLAKALGLQPRQIAIWFQNRRARWKTKQLERDYDSLKKQFDVLKSDNDSLLAHNKKLHAELVALKKHDRKESAKIKREFAEASWSNNGSTENNHNNNSSDANHVSMIKDLFPSSIRSATATTTSTHIDHQIVQDQDQGFCNMFNGIDETTSASYWAWPDQQQQHHNHHQFN.

The disordered stretch occupies residues 77–109 (HHHLTQKSPTTTNNMNDQDQVGEEDNLSDDGSH). Residues 82 to 95 (QKSPTTTNNMNDQD) show a composition bias toward polar residues. Residues 112–171 (LGEKKKRLNLEQVRALEKSFELGNKLEPERKMQLAKALGLQPRQIAIWFQNRRARWKTKQ) constitute a DNA-binding region (homeobox). The leucine-zipper stretch occupies residues 172-207 (LERDYDSLKKQFDVLKSDNDSLLAHNKKLHAELVAL).

Belongs to the HD-ZIP homeobox family. Class I subfamily. As to expression, expressed predominantly in flowers, and in the cortex of the root and the stem.

The protein localises to the nucleus. Its function is as follows. Probable transcription factor. This is Homeobox-leucine zipper protein HAT7 (HAT7) from Arabidopsis thaliana (Mouse-ear cress).